The primary structure comprises 411 residues: Putative competence-damage inducible protein (411 aa).

This sequence belongs to the CinA family.

This is Putative competence-damage inducible protein from Desulforamulus reducens (strain ATCC BAA-1160 / DSM 100696 / MI-1) (Desulfotomaculum reducens).